Here is a 464-residue protein sequence, read N- to C-terminus: MSLSLWQQCLARLQDELPATEFSMWIRPLQAELSDNTLALYAPNRFVLDWVRDKYLNNINGLLNDFCGTDAPLLRFEVGSKPPQMAVLQPASQHASEAPSQAAVARPRPSRPSWDNAPVQPELSYRSNVNPKHNFDNFVEGKSNQLARAAARQVADNPGGAYNPLFLYGGTGLGKTHLLHAVGNGIMARKANAKVVYMHSERFVQDMVKALQNNAIEEFKRYYRSVDALLIDDIQFFANKERSQEEFFHTFNALLEGNQQIILTSDRYPKEINGVEDRLKSRFGWGLTVAIEPPELETRVAILMKKADENAIRLPGEVAFFIAKRLRSNVRELEGALNRVIANANFTGRAITIDFVREALRDLLALQEKLVTIDNIQKTVAEYYKIKVADLLSKRRSRSVARPRQMAMALSKELTNHSLPEIGDAFGGRDHTTVLHACRKIEQLREESHDIKEDFSNLIRTLSS.

Positions 1–82 (MSLSLWQQCL…LLRFEVGSKP (82 aa)) are domain I, interacts with DnaA modulators. Residues 82 to 127 (PPQMAVLQPASQHASEAPSQAAVARPRPSRPSWDNAPVQPELSYRS) form a domain II region. The disordered stretch occupies residues 91–118 (ASQHASEAPSQAAVARPRPSRPSWDNAP). Positions 128–344 (NVNPKHNFDN…GALNRVIANA (217 aa)) are domain III, AAA+ region. Residues G172, G174, K175, and T176 each coordinate ATP. The domain IV, binds dsDNA stretch occupies residues 345–464 (NFTGRAITID…FSNLIRTLSS (120 aa)).

The protein belongs to the DnaA family. As to quaternary structure, oligomerizes as a right-handed, spiral filament on DNA at oriC.

It localises to the cytoplasm. Plays an essential role in the initiation and regulation of chromosomal replication. ATP-DnaA binds to the origin of replication (oriC) to initiate formation of the DNA replication initiation complex once per cell cycle. Binds the DnaA box (a 9 base pair repeat at the origin) and separates the double-stranded (ds)DNA. Forms a right-handed helical filament on oriC DNA; dsDNA binds to the exterior of the filament while single-stranded (ss)DNA is stabiized in the filament's interior. The ATP-DnaA-oriC complex binds and stabilizes one strand of the AT-rich DNA unwinding element (DUE), permitting loading of DNA polymerase. After initiation quickly degrades to an ADP-DnaA complex that is not apt for DNA replication. Binds acidic phospholipids. The sequence is that of Chromosomal replication initiator protein DnaA from Sodalis glossinidius (strain morsitans).